Here is a 131-residue protein sequence, read N- to C-terminus: D-ribose pyranase (131 aa).

His-20 acts as the Proton donor in catalysis. Substrate-binding positions include Asp-28, His-98, and 120 to 122 (YAN).

It belongs to the RbsD / FucU family. RbsD subfamily. In terms of assembly, homodecamer.

It localises to the cytoplasm. It carries out the reaction beta-D-ribopyranose = beta-D-ribofuranose. The protein operates within carbohydrate metabolism; D-ribose degradation; D-ribose 5-phosphate from beta-D-ribopyranose: step 1/2. In terms of biological role, catalyzes the interconversion of beta-pyran and beta-furan forms of D-ribose. The protein is D-ribose pyranase of Bacillus cereus (strain G9842).